The chain runs to 360 residues: Peptide chain release factor 1 (360 aa).

Gln-235 carries the post-translational modification N5-methylglutamine.

Belongs to the prokaryotic/mitochondrial release factor family. Post-translationally, methylated by PrmC. Methylation increases the termination efficiency of RF1.

It localises to the cytoplasm. Functionally, peptide chain release factor 1 directs the termination of translation in response to the peptide chain termination codons UAG and UAA. This Burkholderia mallei (strain NCTC 10247) protein is Peptide chain release factor 1.